Consider the following 946-residue polypeptide: DNA ligase 4 (946 aa).

ATP-binding residues include glutamate 295, lysine 297, arginine 302, glutamate 355, phenylalanine 397, glutamate 457, lysine 462, lysine 479, and lysine 481. Lysine 297 functions as the N6-AMP-lysine intermediate in the catalytic mechanism. Glutamate 355 is a Mg(2+) binding site. Glutamate 457 contributes to the Mg(2+) binding site. BRCT domains are found at residues 688 to 787 (HRSD…PSHC) and 845 to 945 (VPHF…NYRL).

This sequence belongs to the ATP-dependent DNA ligase family. The cofactor is Mg(2+).

The protein resides in the nucleus. It carries out the reaction ATP + (deoxyribonucleotide)n-3'-hydroxyl + 5'-phospho-(deoxyribonucleotide)m = (deoxyribonucleotide)n+m + AMP + diphosphate.. Its function is as follows. DNA ligase involved in DNA non-homologous end joining (NHEJ); required for double-strand break (DSB) repair. The polypeptide is DNA ligase 4 (LIG4) (Candida glabrata (strain ATCC 2001 / BCRC 20586 / JCM 3761 / NBRC 0622 / NRRL Y-65 / CBS 138) (Yeast)).